The following is a 124-amino-acid chain: Transcription initiation factor TFIID subunit 13 (124 aa).

A compositionally biased stretch (acidic residues) spans 1-16 (MADEEEDPTFEEENEE). The interval 1-28 (MADEEEDPTFEEENEEIGGGAEGGQGKR) is disordered. One can recognise a Histone-fold domain in the interval 32-74 (FSKELRCMMYGFGDDQNPYTESVDILEDLVIEFITEMTHKAMS).

This sequence belongs to the TAF13 family. Component of the TFIID basal transcription factor complex, composed of TATA-box-binding protein TBP, and a number of TBP-associated factors (TAFs), including TAF1, TAF2, TAF3, TAF4, TAF5, TAF6, TAF7, TAF8, TAF9, TAF10, TAF11, TAF12 and TAF13. Interacts with TBP, and more strongly with TAF10 and TAF11.

It is found in the nucleus. Its function is as follows. The TFIID basal transcription factor complex plays a major role in the initiation of RNA polymerase II (Pol II)-dependent transcription. TFIID recognizes and binds promoters via its subunit TBP, a TATA-box-binding protein, and promotes assembly of the pre-initiation complex (PIC). The TFIID complex consists of TBP and TBP-associated factors (TAFs), including TAF1, TAF2, TAF3, TAF4, TAF5, TAF6, TAF7, TAF8, TAF9, TAF10, TAF11, TAF12 and TAF13. TAF13, together with TAF11 and TBP, play key roles during promoter binding by the TFIID and TFIIA transcription factor complexes. This is Transcription initiation factor TFIID subunit 13 from Bos taurus (Bovine).